A 220-amino-acid polypeptide reads, in one-letter code: Imidazoleglycerol-phosphate dehydratase (220 aa).

The protein belongs to the imidazoleglycerol-phosphate dehydratase family.

It carries out the reaction D-erythro-1-(imidazol-4-yl)glycerol 3-phosphate = 3-(imidazol-4-yl)-2-oxopropyl phosphate + H2O. The protein operates within amino-acid biosynthesis; L-histidine biosynthesis; L-histidine from 5-phospho-alpha-D-ribose 1-diphosphate: step 6/9. The chain is Imidazoleglycerol-phosphate dehydratase (HIS3) from Eremothecium gossypii (strain ATCC 10895 / CBS 109.51 / FGSC 9923 / NRRL Y-1056) (Yeast).